The primary structure comprises 178 residues: Arginine repressor (178 aa).

The segment at 1 to 21 (MSQAQENEHAGPAVPQTRTAR) is disordered.

It belongs to the ArgR family.

Its subcellular location is the cytoplasm. It functions in the pathway amino-acid biosynthesis; L-arginine biosynthesis [regulation]. Functionally, regulates arginine biosynthesis genes. The protein is Arginine repressor of Streptomyces avermitilis (strain ATCC 31267 / DSM 46492 / JCM 5070 / NBRC 14893 / NCIMB 12804 / NRRL 8165 / MA-4680).